The chain runs to 413 residues: Dual-specificity RNA methyltransferase RlmN (413 aa).

E126 (proton acceptor) is an active-site residue. Positions 132–381 (EEGRGTLCIS…IRTPRGRDIL (250 aa)) constitute a Radical SAM core domain. A disulfide bridge connects residues C139 and C384. The [4Fe-4S] cluster site is built by C146, C150, and C153. S-adenosyl-L-methionine is bound by residues 210–211 (GE), S242, 264–266 (SLH), and N341. Residue C384 is the S-methylcysteine intermediate of the active site.

This sequence belongs to the radical SAM superfamily. RlmN family. The cofactor is [4Fe-4S] cluster.

The protein localises to the cytoplasm. It catalyses the reaction adenosine(2503) in 23S rRNA + 2 reduced [2Fe-2S]-[ferredoxin] + 2 S-adenosyl-L-methionine = 2-methyladenosine(2503) in 23S rRNA + 5'-deoxyadenosine + L-methionine + 2 oxidized [2Fe-2S]-[ferredoxin] + S-adenosyl-L-homocysteine. The enzyme catalyses adenosine(37) in tRNA + 2 reduced [2Fe-2S]-[ferredoxin] + 2 S-adenosyl-L-methionine = 2-methyladenosine(37) in tRNA + 5'-deoxyadenosine + L-methionine + 2 oxidized [2Fe-2S]-[ferredoxin] + S-adenosyl-L-homocysteine. Its function is as follows. Specifically methylates position 2 of adenine 2503 in 23S rRNA and position 2 of adenine 37 in tRNAs. m2A2503 modification seems to play a crucial role in the proofreading step occurring at the peptidyl transferase center and thus would serve to optimize ribosomal fidelity. This Sinorhizobium medicae (strain WSM419) (Ensifer medicae) protein is Dual-specificity RNA methyltransferase RlmN.